Reading from the N-terminus, the 321-residue chain is Ribose import permease protein RbsC (321 aa).

The Cytoplasmic segment spans residues 1 to 22 (MTTQTVSGRRYFTKAWLMEQKS). The helical transmembrane segment at 23 to 43 (LIALLVLIAIVSTLSPNFFTI) threads the bilayer. The Periplasmic portion of the chain corresponds to 44 to 56 (NNLFNILQQTSVN). The chain crosses the membrane as a helical span at residues 57–77 (AIMAVGMTLVILTSGIDLSVG). Residues 78 to 125 (SLLALTGAVAASIVGIEVNALVAVAAALALGAAIGAVTGVIVAKGRVQ) lie on the Cytoplasmic side of the membrane. Residues 126-145 (AFIATLVMMLLLRGVTMVYT) traverse the membrane as a helical segment. The Periplasmic segment spans residues 146–168 (NGSPVNTGFTENADLFGWFGIGR). The helical transmembrane segment at 169-190 (PLGVPTPVWIMGIVFLAAWYML) threads the bilayer. Residues 191 to 220 (HHTRLGRYIYALGGNEAATRLSGINVNKIK) are Cytoplasmic-facing. The helical transmembrane segment at 221–240 (IIVYSLCGLLASLAGIIEVA) threads the bilayer. The Periplasmic segment spans residues 241-294 (RLSSAQPTAGTGYELDAIAAVVLGGTSLAGGKGRIVGTLIGALILGFLNNGLNL). Residues 295–316 (LGVSSYYQMIVKAVVILLAVLV) form a helical membrane-spanning segment. Over 317–321 (DNKKQ) the chain is Cytoplasmic.

Belongs to the binding-protein-dependent transport system permease family. AraH/RbsC subfamily. The complex is composed of an ATP-binding protein (RbsA), two transmembrane proteins (RbsC) and a solute-binding protein (RbsB).

It localises to the cell inner membrane. In terms of biological role, part of the ABC transporter complex RbsABC involved in ribose import. Probably responsible for the translocation of the substrate across the membrane. The polypeptide is Ribose import permease protein RbsC (rbsC) (Escherichia coli O157:H7).